The following is a 457-amino-acid chain: MDRNQKMDHVIGGKFKLGRKLGSGSFGELYLGINIQTGEEVAVKLEPVKTRHPQLQYESKIYMFLQGGTGVPHLKWFGVEGEYSCMVIDLLGPSLEDLFNYCKRIFSLKSVLMLADQLICRVEYMHSRGFLHRDIKPDNFLMGLGRRANQVYIIDYGLAKKYKDLQTQKHIPYRENKNLTGTARYASVNTHLGIEQSRRDDLESLGYVLMYFLRGSLPWQGLKAGTKKQKYDKISEKKMLTSVETLCKSYPSEFTSYFHYCRSLRFEDKPDYSYLRRLFRDLFIREGYQLDYVFDWTISKYPQIGSSSRPRPTPRPALDPPGPPAERAEKPTVGQDLRGRFTGAIEAFTRRNVSSQGALGDRSRHRSSDDIPSSAKEVHESRNGSTSKRGVISSTRPGSSAEPSENHSSRLFSSGSRHATTQRVPQSYESAAAARPGHEDAIRNFELLTIGSGKKRK.

The region spanning 15–284 (FKLGRKLGSG…LRRLFRDLFI (270 aa)) is the Protein kinase domain. ATP-binding positions include 21–29 (LGSGSFGEL) and K44. Catalysis depends on D134, which acts as the Proton acceptor. Disordered stretches follow at residues 305–337 (GSSS…GQDL) and 352–442 (NVSS…EDAI). Over residues 311 to 324 (RPTPRPALDPPGPP) the composition is skewed to pro residues. Polar residues-rich tracts occupy residues 383–403 (NGST…SAEP) and 409–429 (SRLF…QSYE).

The protein belongs to the protein kinase superfamily. CK1 Ser/Thr protein kinase family. Casein kinase I subfamily. As to quaternary structure, monomer. In terms of processing, autophosphorylated.

It is found in the cytoplasm. The protein resides in the nucleus. The catalysed reaction is L-seryl-[protein] + ATP = O-phospho-L-seryl-[protein] + ADP + H(+). It catalyses the reaction L-threonyl-[protein] + ATP = O-phospho-L-threonyl-[protein] + ADP + H(+). With respect to regulation, partially inhibited by N-(2-aminoethyl)-5-chloroisoquinoline-8-sulfonamide (CKI-7). In terms of biological role, casein kinases are operationally defined by their preferential utilization of acidic proteins such as caseins as substrates. Can phosphorylate casein, phosvitin, myosin light chains and poly(Glu,Tyr) in vitro. The polypeptide is Casein kinase 1-like protein 11 (Arabidopsis thaliana (Mouse-ear cress)).